We begin with the raw amino-acid sequence, 499 residues long: uncharacterized protein (499 aa).

The segment at 10–57 (CGICGQEYSEDEKLLIPRILTECGHTICTGCAGKIKGQSSIIACPFDR) adopts an RING-type; degenerate zinc-finger fold. The B box-type; degenerate zinc finger occupies 101–147 (NKNGVCDENTNHHASNYCETCDADLCEECWTWIHSISTLAHHEKKMI).

This is an uncharacterized protein from Caenorhabditis elegans.